An 85-amino-acid chain; its full sequence is Large ribosomal subunit protein bL27 (85 aa).

A disordered region spans residues 1–20 (MAHKKAGGSTRNGRDSESKR).

The protein belongs to the bacterial ribosomal protein bL27 family.

This Azotobacter vinelandii (strain DJ / ATCC BAA-1303) protein is Large ribosomal subunit protein bL27.